A 146-amino-acid chain; its full sequence is Globin (146 aa).

N-acetylserine is present on serine 1. One can recognise a Globin domain in the interval serine 1–lysine 146. Heme b is bound at residue histidine 95.

Belongs to the globin family. As to quaternary structure, monomer.

The protein is Globin of Bursatella leachii (Ragged sea hare).